We begin with the raw amino-acid sequence, 94 residues long: Probable FAD-linked sulfhydryl oxidase FPV093 (94 aa).

Positions 1–94 constitute an ERV/ALR sulfhydryl oxidase domain; the sequence is MDPRYWGSSF…IDIKKVKKLI (94 aa). A disulfide bond links cysteine 41 and cysteine 44.

It belongs to the poxviruses E10 family. The cofactor is FAD.

The enzyme catalyses 2 R'C(R)SH + O2 = R'C(R)S-S(R)CR' + H2O2. Its function is as follows. FAD-dependent sulfhydryl oxidase that catalyzes disulfide bond formation. This is Probable FAD-linked sulfhydryl oxidase FPV093 from Fowlpox virus (strain NVSL) (FPV).